A 253-amino-acid chain; its full sequence is Phosphate import ATP-binding protein PstB (253 aa).

The 241-residue stretch at 8–248 (IQVRDLDLFY…PRDKRTEDYI (241 aa)) folds into the ABC transporter domain. ATP is bound at residue 40–47 (GPSGCGKS).

This sequence belongs to the ABC transporter superfamily. Phosphate importer (TC 3.A.1.7) family. In terms of assembly, the complex is composed of two ATP-binding proteins (PstB), two transmembrane proteins (PstC and PstA) and a solute-binding protein (PstS).

It localises to the cell membrane. It carries out the reaction phosphate(out) + ATP + H2O = ADP + 2 phosphate(in) + H(+). Part of the ABC transporter complex PstSACB involved in phosphate import. Responsible for energy coupling to the transport system. The chain is Phosphate import ATP-binding protein PstB from Clostridium perfringens (strain ATCC 13124 / DSM 756 / JCM 1290 / NCIMB 6125 / NCTC 8237 / Type A).